The sequence spans 389 residues: Meiosis-specific protein MEI4 (389 aa).

Residues 1-127 (MDIQPWYLKT…LSQHFVESTD (127 aa)) form an interaction with REC114 region.

It belongs to the MEI4L family. As to quaternary structure, part of the MCD recombinosome complex, at least composed of IHO1, REC114 and MEI4. Forms a complex with REC114; the interaction is required for MEI4 stability. Interacts (via N-terminal domain) with REC114 (via C-terminal domain). Interacts with IHO1. In terms of tissue distribution, expressed in adult testis and brain and in embryonic ovary.

The protein resides in the chromosome. Required for DNA double-strand breaks (DSBs) formation in unsynapsed regions during meiotic recombination. Probably acts by forming a complex with IHO1 and REC114, which activates DSBs formation in unsynapsed regions, an essential step to ensure completion of synapsis. This is Meiosis-specific protein MEI4 from Mus musculus (Mouse).